Reading from the N-terminus, the 305-residue chain is Acetylglutamate kinase (305 aa).

Substrate is bound by residues G67–G68, R89, and N190.

The protein belongs to the acetylglutamate kinase family. ArgB subfamily.

Its subcellular location is the cytoplasm. It carries out the reaction N-acetyl-L-glutamate + ATP = N-acetyl-L-glutamyl 5-phosphate + ADP. It participates in amino-acid biosynthesis; L-arginine biosynthesis; N(2)-acetyl-L-ornithine from L-glutamate: step 2/4. Catalyzes the ATP-dependent phosphorylation of N-acetyl-L-glutamate. In Bifidobacterium longum (strain NCC 2705), this protein is Acetylglutamate kinase.